A 70-amino-acid polypeptide reads, in one-letter code: Large ribosomal subunit protein eL38 (70 aa).

It belongs to the eukaryotic ribosomal protein eL38 family.

In Plutella xylostella (Diamondback moth), this protein is Large ribosomal subunit protein eL38 (RpL38).